The sequence spans 272 residues: Cell division protein FtsQ (272 aa).

Topologically, residues 1–43 are cytoplasmic; the sequence is MEYNPPNTRERIAARRQRLRQPSSEPAIPGWRRRFIDGLQSGR. The chain crosses the membrane as a helical span at residues 44 to 64; it reads IVSGAVFVVSCLALFYVLFSS. Residues 65–272 are Extracellular-facing; sequence QFRVQTVEVV…FYQNRTDGRS (208 aa). The POTRA domain maps to 66–133; sequence FRVQTVEVVG…DRARIVIVER (68 aa).

This sequence belongs to the FtsQ/DivIB family. FtsQ subfamily.

The protein localises to the cell membrane. Essential cell division protein. This Chloroflexus aggregans (strain MD-66 / DSM 9485) protein is Cell division protein FtsQ.